The chain runs to 382 residues: UDP-4-amino-4-deoxy-L-arabinose--oxoglutarate aminotransferase (382 aa).

Lys182 is subject to N6-(pyridoxal phosphate)lysine.

It belongs to the DegT/DnrJ/EryC1 family. ArnB subfamily. In terms of assembly, homodimer. It depends on pyridoxal 5'-phosphate as a cofactor.

The catalysed reaction is UDP-4-amino-4-deoxy-beta-L-arabinose + 2-oxoglutarate = UDP-beta-L-threo-pentopyranos-4-ulose + L-glutamate. The protein operates within nucleotide-sugar biosynthesis; UDP-4-deoxy-4-formamido-beta-L-arabinose biosynthesis; UDP-4-deoxy-4-formamido-beta-L-arabinose from UDP-alpha-D-glucuronate: step 2/3. It functions in the pathway bacterial outer membrane biogenesis; lipopolysaccharide biosynthesis. Catalyzes the conversion of UDP-4-keto-arabinose (UDP-Ara4O) to UDP-4-amino-4-deoxy-L-arabinose (UDP-L-Ara4N). The modified arabinose is attached to lipid A and is required for resistance to polymyxin and cationic antimicrobial peptides. The protein is UDP-4-amino-4-deoxy-L-arabinose--oxoglutarate aminotransferase of Pectobacterium carotovorum subsp. carotovorum (strain PC1).